The following is a 541-amino-acid chain: Chaperonin GroEL 1 (541 aa).

ATP-binding positions include 29-32 (TLGP), 86-90 (DGTTT), Gly413, and Asp492.

This sequence belongs to the chaperonin (HSP60) family. As to quaternary structure, forms a cylinder of 14 subunits composed of two heptameric rings stacked back-to-back. Interacts with the co-chaperonin GroES.

The protein localises to the cytoplasm. The enzyme catalyses ATP + H2O + a folded polypeptide = ADP + phosphate + an unfolded polypeptide.. Functionally, together with its co-chaperonin GroES, plays an essential role in assisting protein folding. The GroEL-GroES system forms a nano-cage that allows encapsulation of the non-native substrate proteins and provides a physical environment optimized to promote and accelerate protein folding. This chain is Chaperonin GroEL 1, found in Rhodococcus jostii (strain RHA1).